Here is a 583-residue protein sequence, read N- to C-terminus: PTS system lactose-specific EIICB component (583 aa).

Residues 8 to 409 (IEKGKPFFEK…VVDVMIYYPF (402 aa)) form the PTS EIIC type-3 domain. 9 helical membrane-spanning segments follow: residues 30-50 (GFIA…ITYV), 64-84 (GILM…VAGT), 103-123 (INFI…AADP), 137-157 (KGLL…NFFI), 176-196 (VFKD…LDLL), 222-242 (GWIG…VGIH), 283-303 (FVAT…FMWL), 339-359 (VFFI…KFFV), and 381-401 (IVMG…LIVV). Positions 453 to 462 (ANETTTTESA) are enriched in low complexity. Positions 453 to 475 (ANETTTTESAPSDEEVSAKNSSN) are disordered. Residues 480 to 583 (QTNVLVLCAG…LDFVQQQFEK (104 aa)) enclose the PTS EIIB type-3 domain. The Phosphocysteine intermediate; for EIIB activity role is filled by Cys-487. At Cys-487 the chain carries Phosphocysteine; by EIIA.

The protein localises to the cell membrane. The enzyme catalyses lactose(out) + N(pros)-phospho-L-histidyl-[protein] = lactose 6-phosphate(in) + L-histidyl-[protein]. The phosphoenolpyruvate-dependent sugar phosphotransferase system (sugar PTS), a major carbohydrate active transport system, catalyzes the phosphorylation of incoming sugar substrates concomitantly with their translocation across the cell membrane. The enzyme II LacEF PTS system is involved in lactose transport. The sequence is that of PTS system lactose-specific EIICB component from Staphylococcus haemolyticus (strain JCSC1435).